The primary structure comprises 289 residues: Protoheme IX farnesyltransferase 2 (289 aa).

The next 9 helical transmembrane spans lie at 4–24 (PGII…AAKG), 28–48 (LVLM…GCAI), 66–86 (RVTV…LALG), 99–118 (ALAL…VYSL), 124–144 (SVYG…VGYC), 155–175 (AILL…IAIF), 199–219 (LHIV…PLAG), 221–241 (TGIA…AMAL), and 256–276 (QVFG…ALDF).

It belongs to the UbiA prenyltransferase family. Protoheme IX farnesyltransferase subfamily.

The protein resides in the cell inner membrane. The enzyme catalyses heme b + (2E,6E)-farnesyl diphosphate + H2O = Fe(II)-heme o + diphosphate. It participates in porphyrin-containing compound metabolism; heme O biosynthesis; heme O from protoheme: step 1/1. Functionally, converts heme B (protoheme IX) to heme O by substitution of the vinyl group on carbon 2 of heme B porphyrin ring with a hydroxyethyl farnesyl side group. The protein is Protoheme IX farnesyltransferase 2 of Shewanella baltica (strain OS195).